The primary structure comprises 912 residues: Receptor protein kinase WSS1 (912 aa).

An N-terminal signal peptide occupies residues 1–27; that stretch reads MGRDARRLPLLPFLLLLLAAAAGVAES. At 28–477 the chain is on the extracellular side; that stretch reads ATDAEAIHDL…AGGGKSKPNT (450 aa). LRR repeat units lie at residues 64–88, 89–111, and 112–134; these read AGKV…LSSL, TSLT…LARM, and GSLA…FLHG. N-linked (GlcNAc...) asparagine glycans are attached at residues asparagine 159, asparagine 170, asparagine 196, asparagine 256, asparagine 286, asparagine 371, asparagine 376, asparagine 387, and asparagine 400. LRR repeat units lie at residues 184-208, 235-261, 281-303, 364-388, 389-411, and 413-438; these read LVSL…LSSL, MKSL…TQLE, LMSL…AFAA, SSDV…LANL, TRLA…VLTT, and PSLT…SVNV. The disordered stretch occupies residues 448–472; it reads SSGSSGGGGGSDGDSSSSDSAGGGK. The chain crosses the membrane as a helical span at residues 478-498; sequence GMIIGIIVAVIILFACIALLV. The Cytoplasmic segment spans residues 499–912; that stretch reads HHRKKKNVEK…SFNVPRKYNG (414 aa). Residues 580–859 form the Protein kinase domain; that stretch reads FSEDCILGRG…HCVNRLSSLV (280 aa). ATP contacts are provided by residues 586 to 594 and lysine 607; that span reads LGRGGFGVV. The Proton acceptor role is filled by aspartate 708.

Belongs to the protein kinase superfamily. Ser/Thr protein kinase family. Mn(2+) serves as cofactor. Expressed in young and mature leaves.

The protein localises to the cell membrane. It catalyses the reaction L-seryl-[protein] + ATP = O-phospho-L-seryl-[protein] + ADP + H(+). The catalysed reaction is L-threonyl-[protein] + ATP = O-phospho-L-threonyl-[protein] + ADP + H(+). In terms of biological role, transmembrane kinase receptor involved in the regulation of reactive oxygen species (ROS) homeostasis, chloroplast development and leaf senescence. This Oryza sativa subsp. japonica (Rice) protein is Receptor protein kinase WSS1.